Here is a 355-residue protein sequence, read N- to C-terminus: MFDKIEELEIRYQELESLLAVPTVIANQPEFRKLSREHNDLTGLVEAYRRYKKVLAEIEGNRELLADPEMKEMAEAELEDLERQQEELEGEIKLLLLPKDPNDDRNVILEIRAGTGGDESALFAGDLFRMYSRFAERNRWKVEVMSASESERGGFKEVVALIEGQAVFAKLKYESGTHRVQRVPETEAQGRIHTSACTVAVLPEAEDIEIDINPVDLKIDVYRASGAGGQHVNKTESAVRITHLPTGIVVECQDERSQIKNRSKAMKVLKSRILDGLQQEQNARIAADRKQQVGSGDRSERIRTYNFPQGRMTDHRIGLTLYRLDALMEGDIAEVVDSLRAHYQMEALKAQAEAA.

Residue Q230 is modified to N5-methylglutamine.

The protein belongs to the prokaryotic/mitochondrial release factor family. In terms of processing, methylated by PrmC. Methylation increases the termination efficiency of RF1.

It localises to the cytoplasm. Functionally, peptide chain release factor 1 directs the termination of translation in response to the peptide chain termination codons UAG and UAA. This is Peptide chain release factor 1 from Geobacter metallireducens (strain ATCC 53774 / DSM 7210 / GS-15).